The primary structure comprises 468 residues: Glutamine synthetase (468 aa).

Residues 11–96 (HDVKWIDLRF…LVCDIIEPST (86 aa)) enclose the GS beta-grasp domain. The GS catalytic domain maps to 104–468 (PRAIAHRAEE…PLEYELYYSC (365 aa)). Glutamate 129 and glutamate 131 together coordinate Mg(2+). ATP is bound at residue glutamate 207. Mg(2+)-binding residues include glutamate 212 and glutamate 220. Residues 264–265 (NG) and glycine 265 each bind L-glutamate. Residue histidine 269 participates in Mg(2+) binding. Residues 271–273 (HMS) and serine 273 each bind ATP. Residues arginine 321, glutamate 327, and arginine 339 each contribute to the L-glutamate site. Residues arginine 339, arginine 344, and arginine 352 each contribute to the ATP site. Glutamate 357 contributes to the Mg(2+) binding site. Arginine 359 serves as a coordination point for L-glutamate. Residue tyrosine 397 is modified to O-AMP-tyrosine.

The protein belongs to the glutamine synthetase family. As to quaternary structure, oligomer of 12 subunits arranged in the form of two hexagons. Mg(2+) is required as a cofactor. The cofactor is Mn(2+).

It catalyses the reaction L-glutamate + NH4(+) + ATP = L-glutamine + ADP + phosphate + H(+). With respect to regulation, when cellular nitrogen levels are high, the C-terminal adenylyl transferase (AT) of GlnE inhibits GlnA by covalent transfer of an adenylyl group from ATP to Tyr-397. Conversely, when nitrogen levels are low, the N-terminal adenylyl removase (AR) of GlnE activates GlnA by removing the adenylyl group by phosphorolysis. The fully adenylated enzyme complex is inactive. Its function is as follows. Catalyzes the formation of glutamine from glutamate and ammonia. In vitro, can also use hydroxylamine, methylamine and ethylamine, with 32%, 7% and 1% activity compared to ammonia, respectively. This is Glutamine synthetase from Pseudomonas taetrolens.